A 521-amino-acid polypeptide reads, in one-letter code: Bifunctional purine biosynthesis protein PurH (521 aa).

The 145-residue stretch at 1-145 folds into the MGS-like domain; it reads MIKQALISVS…KNHRDVTVVV (145 aa).

This sequence belongs to the PurH family.

It catalyses the reaction (6R)-10-formyltetrahydrofolate + 5-amino-1-(5-phospho-beta-D-ribosyl)imidazole-4-carboxamide = 5-formamido-1-(5-phospho-D-ribosyl)imidazole-4-carboxamide + (6S)-5,6,7,8-tetrahydrofolate. It carries out the reaction IMP + H2O = 5-formamido-1-(5-phospho-D-ribosyl)imidazole-4-carboxamide. It participates in purine metabolism; IMP biosynthesis via de novo pathway; 5-formamido-1-(5-phospho-D-ribosyl)imidazole-4-carboxamide from 5-amino-1-(5-phospho-D-ribosyl)imidazole-4-carboxamide (10-formyl THF route): step 1/1. Its pathway is purine metabolism; IMP biosynthesis via de novo pathway; IMP from 5-formamido-1-(5-phospho-D-ribosyl)imidazole-4-carboxamide: step 1/1. In Burkholderia thailandensis (strain ATCC 700388 / DSM 13276 / CCUG 48851 / CIP 106301 / E264), this protein is Bifunctional purine biosynthesis protein PurH.